The chain runs to 37 residues: Large ribosomal subunit protein bL36 (37 aa).

This sequence belongs to the bacterial ribosomal protein bL36 family.

The polypeptide is Large ribosomal subunit protein bL36 (Bacillus pumilus (strain SAFR-032)).